The following is a 425-amino-acid chain: Serine--tRNA ligase (425 aa).

L-serine is bound at residue 233–235 (TAE). ATP is bound at residue 264–266 (RRE). Glutamate 287 lines the L-serine pocket. 351–354 (EISS) lines the ATP pocket. Residue serine 387 coordinates L-serine.

This sequence belongs to the class-II aminoacyl-tRNA synthetase family. Type-1 seryl-tRNA synthetase subfamily. Homodimer. The tRNA molecule binds across the dimer.

The protein resides in the cytoplasm. The catalysed reaction is tRNA(Ser) + L-serine + ATP = L-seryl-tRNA(Ser) + AMP + diphosphate + H(+). It carries out the reaction tRNA(Sec) + L-serine + ATP = L-seryl-tRNA(Sec) + AMP + diphosphate + H(+). It functions in the pathway aminoacyl-tRNA biosynthesis; selenocysteinyl-tRNA(Sec) biosynthesis; L-seryl-tRNA(Sec) from L-serine and tRNA(Sec): step 1/1. Its function is as follows. Catalyzes the attachment of serine to tRNA(Ser). Is also able to aminoacylate tRNA(Sec) with serine, to form the misacylated tRNA L-seryl-tRNA(Sec), which will be further converted into selenocysteinyl-tRNA(Sec). In Thermotoga maritima (strain ATCC 43589 / DSM 3109 / JCM 10099 / NBRC 100826 / MSB8), this protein is Serine--tRNA ligase.